The primary structure comprises 208 residues: CASP-like protein 2A1 (208 aa).

At 1-36 (MEERSGVLETSRSCKQLIGPEGSDKEFEGYIDSNLR) the chain is on the cytoplasmic side. A helical transmembrane segment spans residues 37-57 (VVETFLRLFPIGLCVTALVIM). Over 58 to 79 (LKNSQENKYGSVSYTDLGAFRY) the chain is Extracellular. The chain crosses the membrane as a helical span at residues 80–100 (LVHANGICAGYSLFSAIFVAL). Topologically, residues 101–107 (PRLSSVH) are cytoplasmic. The chain crosses the membrane as a helical span at residues 108-128 (IAWTFFVLDQVLTYIILSAGA). Residues 129 to 159 (ASAEVLYLAEKGNMATAWSSACRSFGPFCHK) are Extracellular-facing. Residues 160 to 180 (VTASTTITFVVVVFYVLLSLI) traverse the membrane as a helical segment. The Cytoplasmic segment spans residues 181 to 208 (SSYKLFSKYDAPTVSNPSMGADIVAFHG).

The protein belongs to the Casparian strip membrane proteins (CASP) family. As to quaternary structure, homodimer and heterodimers.

It is found in the cell membrane. This chain is CASP-like protein 2A1, found in Glycine max (Soybean).